The primary structure comprises 207 residues: Serotonin N-acetyltransferase (207 aa).

The disordered stretch occupies residues 1–29 (MSTPSVHCLKPSPLHLPSGIPGSPGRQRR). Residues 28 to 35 (RRHTLPAN) form a YWHAZ-binding region. Thr-31 is subject to Phosphothreonine; by PKA. The region spanning 35–196 (NEFRCLTPED…TFTEMHCSLR (162 aa)) is the N-acetyltransferase domain. Substrate is bound at residue Leu-124. Acetyl-CoA contacts are provided by residues 124–126 (LAV) and 132–137 (QQGKGS). Met-159 serves as a coordination point for substrate. 168-170 (YQR) contributes to the acetyl-CoA binding site. Ser-205 carries the post-translational modification Phosphoserine; by PKA.

This sequence belongs to the acetyltransferase family. AANAT subfamily. As to quaternary structure, monomer. Interacts with several 14-3-3 proteins, including YWHAB, YWHAE, YWHAG and YWHAZ, preferentially when phosphorylated at Thr-31. Phosphorylation on Ser-205 also allows binding to YWHAZ, but with a 10-fold lower affinity. The interaction with YWHAZ considerably increases affinity for arylalkylamines and acetyl-CoA and protects the enzyme from dephosphorylation and proteasomal degradation. It may also prevent thiol-dependent inactivation. The physiological stoichiometry of the interaction is not clear. In vitro studies show either 1:2 (i.e. 1 AANAT molecule per YWHAZ dimer) or 2:2. In terms of processing, cAMP-dependent phosphorylation on both N-terminal Thr-31 and C-terminal Ser-205 regulates AANAT activity by promoting interaction with 14-3-3 proteins. As to expression, highest expression in the pineal gland, followed by retina. Expressed at much lower levels in brainstem and pituitary gland. AANAT activity also detected at low levels in the olfactory lobe.

It is found in the cytoplasm. It catalyses the reaction a 2-arylethylamine + acetyl-CoA = an N-acetyl-2-arylethylamine + CoA + H(+). Its pathway is aromatic compound metabolism; melatonin biosynthesis; melatonin from serotonin: step 1/2. Functionally, controls the night/day rhythm of melatonin production in the pineal gland. Catalyzes the N-acetylation of serotonin into N-acetylserotonin, the penultimate step in the synthesis of melatonin. This is Serotonin N-acetyltransferase (AANAT) from Ovis aries (Sheep).